The chain runs to 320 residues: Aminoacyl tRNA synthase complex-interacting multifunctional protein 2 (320 aa).

The segment at 82–162 is interaction with PRKN; that stretch reads TPDADLDVTN…HTHSSVKSVP (81 aa). Residues 162–225 form an interaction with TP53 region; that stretch reads PENLLKCFGE…FLFSLFGQKH (64 aa). Residues 220 to 317 form the GST C-terminal domain; that stretch reads LFGQKHNAVN…NLAPFNTALK (98 aa).

In terms of assembly, part of the multisynthetase complex (MSC), a multisubunit complex that groups tRNA ligases for Arg (RARS1), Asp (DARS1), Gln (QARS1), Ile (IARS1), Leu (LARS1), Lys (KARS1), Met (MARS1) the bifunctional ligase for Glu and Pro (EPRS1) and the auxiliary subunits AIMP1/p43, AIMP2/p38 and EEF1E1/p18. Interacts (via N-terminus) with KARS1. Interacts with EPRS1. Forms a linear complex that contains MARS1, EEF1E1, EPRS1 and AIMP2 that is at the core of the multisubunit complex. Binds FUBP1 (via C-terminus). Interacts in both its unphosphorylated and phosphorylated forms with p53/TP53 (via N-terminus) in the nucleus following UV irradiation. Interacts (via N-terminus) with PRKN/parkin (via first RING-type domain). Interacts with TARS3. Post-translationally, phosphorylated on serine residues in response to UV irradiation. Ubiquitinated by PRKN, leading to its degradation by the proteasome. Mutant PRKN fails to ubiquitinate AIMP2 efficiently, allowing its accumulation which may contribute to neurodegeneration associated with Parkinson disease.

Its subcellular location is the cytoplasm. It localises to the cytosol. It is found in the nucleus. Functionally, required for assembly and stability of the aminoacyl-tRNA synthase complex. Mediates ubiquitination and degradation of FUBP1, a transcriptional activator of MYC, leading to MYC down-regulation which is required for aveolar type II cell differentiation. Blocks MDM2-mediated ubiquitination and degradation of p53/TP53. Functions as a proapoptotic factor. The chain is Aminoacyl tRNA synthase complex-interacting multifunctional protein 2 (AIMP2) from Homo sapiens (Human).